The following is a 437-amino-acid chain: CCA-adding enzyme (437 aa).

S47 and R50 together coordinate ATP. CTP is bound by residues S47 and R50. 3 residues coordinate Mg(2+): E59, D61, and D110. ATP contacts are provided by H133, K152, and Y161. 3 residues coordinate CTP: H133, K152, and Y161.

This sequence belongs to the tRNA nucleotidyltransferase/poly(A) polymerase family. Archaeal CCA-adding enzyme subfamily. In terms of assembly, homodimer. Requires Mg(2+) as cofactor.

It catalyses the reaction a tRNA precursor + 2 CTP + ATP = a tRNA with a 3' CCA end + 3 diphosphate. It carries out the reaction a tRNA with a 3' CCA end + 2 CTP + ATP = a tRNA with a 3' CCACCA end + 3 diphosphate. Catalyzes the addition and repair of the essential 3'-terminal CCA sequence in tRNAs without using a nucleic acid template. Adds these three nucleotides in the order of C, C, and A to the tRNA nucleotide-73, using CTP and ATP as substrates and producing inorganic pyrophosphate. tRNA 3'-terminal CCA addition is required both for tRNA processing and repair. Also involved in tRNA surveillance by mediating tandem CCA addition to generate a CCACCA at the 3' terminus of unstable tRNAs. While stable tRNAs receive only 3'-terminal CCA, unstable tRNAs are marked with CCACCA and rapidly degraded. The structural flexibility of RNA controls the choice between CCA versus CCACCA addition: following the first CCA addition cycle, nucleotide-binding to the active site triggers a clockwise screw motion, producing torque on the RNA. This ejects stable RNAs, whereas unstable RNAs are refolded while bound to the enzyme and subjected to a second CCA catalytic cycle. The sequence is that of CCA-adding enzyme from Archaeoglobus fulgidus (strain ATCC 49558 / DSM 4304 / JCM 9628 / NBRC 100126 / VC-16).